The following is a 541-amino-acid chain: Membrane protein insertase YidC (541 aa).

The next 6 helical transmembrane spans lie at 6–26 (NLLL…WESD), 326–346 (VVDY…LMFF), 349–369 (LVHN…GLLY), 420–440 (GGCL…WVLL), 457–477 (LSVQ…MWAM), and 500–520 (MIFT…WLVG).

The protein belongs to the OXA1/ALB3/YidC family. Type 1 subfamily. In terms of assembly, interacts with the Sec translocase complex via SecD. Specifically interacts with transmembrane segments of nascent integral membrane proteins during membrane integration.

It localises to the cell inner membrane. Functionally, required for the insertion and/or proper folding and/or complex formation of integral membrane proteins into the membrane. Involved in integration of membrane proteins that insert both dependently and independently of the Sec translocase complex, as well as at least some lipoproteins. Aids folding of multispanning membrane proteins. This is Membrane protein insertase YidC from Shewanella amazonensis (strain ATCC BAA-1098 / SB2B).